A 385-amino-acid polypeptide reads, in one-letter code: S-adenosylmethionine synthase (385 aa).

An ATP-binding site is contributed by histidine 16. Aspartate 18 is a Mg(2+) binding site. K(+) is bound at residue glutamate 44. 2 residues coordinate L-methionine: glutamate 57 and glutamine 100. A flexible loop region spans residues 100-110 (QSPDINQGVDR). Residues 164–166 (DGK), 230–231 (KF), aspartate 239, 245–246 (RK), alanine 262, and lysine 266 each bind ATP. Residue aspartate 239 coordinates L-methionine. An L-methionine-binding site is contributed by lysine 270.

Belongs to the AdoMet synthase family. Homotetramer; dimer of dimers. Mg(2+) is required as a cofactor. The cofactor is K(+).

The protein localises to the cytoplasm. The enzyme catalyses L-methionine + ATP + H2O = S-adenosyl-L-methionine + phosphate + diphosphate. The protein operates within amino-acid biosynthesis; S-adenosyl-L-methionine biosynthesis; S-adenosyl-L-methionine from L-methionine: step 1/1. Its function is as follows. Catalyzes the formation of S-adenosylmethionine (AdoMet) from methionine and ATP. The overall synthetic reaction is composed of two sequential steps, AdoMet formation and the subsequent tripolyphosphate hydrolysis which occurs prior to release of AdoMet from the enzyme. This chain is S-adenosylmethionine synthase, found in Helicobacter pylori (strain HPAG1).